A 278-amino-acid chain; its full sequence is Elongation factor Ts (278 aa).

An involved in Mg(2+) ion dislocation from EF-Tu region spans residues 79 to 82 (TDFV).

The protein belongs to the EF-Ts family.

Its subcellular location is the cytoplasm. Its function is as follows. Associates with the EF-Tu.GDP complex and induces the exchange of GDP to GTP. It remains bound to the aminoacyl-tRNA.EF-Tu.GTP complex up to the GTP hydrolysis stage on the ribosome. This is Elongation factor Ts from Borrelia duttonii (strain Ly).